The sequence spans 417 residues: 4-hydroxy-3-methylbut-2-en-1-yl diphosphate synthase (flavodoxin) (417 aa).

Positions 304, 307, 350, and 357 each coordinate [4Fe-4S] cluster.

It belongs to the IspG family. [4Fe-4S] cluster is required as a cofactor.

The catalysed reaction is (2E)-4-hydroxy-3-methylbut-2-enyl diphosphate + oxidized [flavodoxin] + H2O + 2 H(+) = 2-C-methyl-D-erythritol 2,4-cyclic diphosphate + reduced [flavodoxin]. It functions in the pathway isoprenoid biosynthesis; isopentenyl diphosphate biosynthesis via DXP pathway; isopentenyl diphosphate from 1-deoxy-D-xylulose 5-phosphate: step 5/6. Converts 2C-methyl-D-erythritol 2,4-cyclodiphosphate (ME-2,4cPP) into 1-hydroxy-2-methyl-2-(E)-butenyl 4-diphosphate. The protein is 4-hydroxy-3-methylbut-2-en-1-yl diphosphate synthase (flavodoxin) of Rhizobium meliloti (strain 1021) (Ensifer meliloti).